Reading from the N-terminus, the 256-residue chain is 4-hydroxy-tetrahydrodipicolinate reductase (256 aa).

NAD(+) contacts are provided by residues glycine 12–valine 17, aspartate 39, glycine 86–threonine 88, and alanine 110–tyrosine 113. The active-site Proton donor/acceptor is the histidine 144. A (S)-2,3,4,5-tetrahydrodipicolinate-binding site is contributed by histidine 145. Residue lysine 148 is the Proton donor of the active site. Residue glycine 154–threonine 155 coordinates (S)-2,3,4,5-tetrahydrodipicolinate.

The protein belongs to the DapB family.

It localises to the cytoplasm. It catalyses the reaction (S)-2,3,4,5-tetrahydrodipicolinate + NAD(+) + H2O = (2S,4S)-4-hydroxy-2,3,4,5-tetrahydrodipicolinate + NADH + H(+). The catalysed reaction is (S)-2,3,4,5-tetrahydrodipicolinate + NADP(+) + H2O = (2S,4S)-4-hydroxy-2,3,4,5-tetrahydrodipicolinate + NADPH + H(+). Its pathway is amino-acid biosynthesis; L-lysine biosynthesis via DAP pathway; (S)-tetrahydrodipicolinate from L-aspartate: step 4/4. Catalyzes the conversion of 4-hydroxy-tetrahydrodipicolinate (HTPA) to tetrahydrodipicolinate. In Gluconacetobacter diazotrophicus (strain ATCC 49037 / DSM 5601 / CCUG 37298 / CIP 103539 / LMG 7603 / PAl5), this protein is 4-hydroxy-tetrahydrodipicolinate reductase.